A 43-amino-acid polypeptide reads, in one-letter code: Defensin (43 aa).

3 cysteine pairs are disulfide-bonded: C3–C34, C20–C39, and C24–C41.

Its subcellular location is the secreted. Functionally, antibacterial peptide active against Gram-positive and Gram-negative bacteria. This chain is Defensin, found in Palomena prasina (Green shield bug).